We begin with the raw amino-acid sequence, 104 residues long: Replication restart protein PriB (104 aa).

Positions 2-101 constitute an SSB domain; it reads TNRLVLSGTV…LHAEQIELID (100 aa). The cysteines at positions 48 and 80 are disulfide-linked. An L45 loop motif is present at residues 82–89; the sequence is KAKNGLSK.

Belongs to the PriB family. In terms of assembly, homodimer. Primosome assembly occurs via a 'hand-off' mechanism. PriA binds to replication forks, subsequently PriB then DnaT bind; DnaT then displaces ssDNA to generate the helicase loading substrate, which allows DnaC to load helicase DnaB onto the fork. ssDNA is displaced from the PriB-ssDNA complex by DnaT. In a PriA-PriB-replication fork structure, movement of the PriA CRR domain exposes a surface to which PriB binds and contacts ssDNA emerging from the PriA pore. Binds PriA; binding is improved in the presence of ssDNA. Weakly binds DnaT; binding is improved in the presence of ssDNA; as DnaT levels increase PriB dissociates from ssDNA. Component of the replication restart primosome, which is composed of PriA, PriB, PriC, DnaB and DnaT; DnaG primase associates transiently with this complex. Component of the preprimosomal complex composed of one monomer of PriC and DnaT, two monomers of PriA, two dimers of PriB and one hexamer of DnaB. In terms of processing, an intersubunit disulfide bond is seen in some crystals.

In terms of biological role, involved in the restart of stalled replication forks, which reloads the replicative helicase (DnaB) on sites other than the origin of replication; the PriA-PriB pathway is the major replication restart pathway. There are several restart pathways, the PriA-PriB pathway is subdivided into 2 distinct pathways. priB and priC have redundant roles in the cell. During primosome assembly it facilitates complex formation between PriA and DnaT on DNA; stabilizes PriA on DNA, presumably by preventing or inhibiting PriA DNA translocation activity. Forms a branched DNA-PriA-PriB complex when the lagging strand is single-stranded (ss)DNA. Binds ssDNA in the presence and absence of ssDNA DNA-binding protein (SSB), does not bind branched structures. DNA binding, forming spiral filaments on ssDNA, is cooperative. Stimulates the helicase activity of PriA. The homodimer binds 12 nucleotides of ssDNA. Binds homo-pyrimidine tracts better than homo-purine tracts. Its function is as follows. Genetic interactions among priB, dam, lexA, nagC, polA, rdgB, rdgB, rep and uup link the PriA-PriB replication restart pathway to DNA double-strand break repair. In Escherichia coli (strain K12), this protein is Replication restart protein PriB.